Consider the following 265-residue polypeptide: S-adenosylmethionine decarboxylase proenzyme (265 aa).

Catalysis depends on Ser-114, which acts as the Schiff-base intermediate with substrate; via pyruvic acid. Ser-114 is subject to Pyruvic acid (Ser); by autocatalysis. The active-site Proton acceptor; for processing activity is the His-119. Cys-142 functions as the Proton donor; for catalytic activity in the catalytic mechanism.

The protein belongs to the prokaryotic AdoMetDC family. Type 2 subfamily. Heterooctamer of four alpha and four beta chains arranged as a tetramer of alpha/beta heterodimers. Requires pyruvate as cofactor. In terms of processing, is synthesized initially as an inactive proenzyme. Formation of the active enzyme involves a self-maturation process in which the active site pyruvoyl group is generated from an internal serine residue via an autocatalytic post-translational modification. Two non-identical subunits are generated from the proenzyme in this reaction, and the pyruvate is formed at the N-terminus of the alpha chain, which is derived from the carboxyl end of the proenzyme. The post-translation cleavage follows an unusual pathway, termed non-hydrolytic serinolysis, in which the side chain hydroxyl group of the serine supplies its oxygen atom to form the C-terminus of the beta chain, while the remainder of the serine residue undergoes an oxidative deamination to produce ammonia and the pyruvoyl group blocking the N-terminus of the alpha chain.

It carries out the reaction S-adenosyl-L-methionine + H(+) = S-adenosyl 3-(methylsulfanyl)propylamine + CO2. Its pathway is amine and polyamine biosynthesis; S-adenosylmethioninamine biosynthesis; S-adenosylmethioninamine from S-adenosyl-L-methionine: step 1/1. Functionally, catalyzes the decarboxylation of S-adenosylmethionine to S-adenosylmethioninamine (dcAdoMet), the propylamine donor required for the synthesis of the polyamines spermine and spermidine from the diamine putrescine. In Buchnera aphidicola subsp. Acyrthosiphon pisum (strain APS) (Acyrthosiphon pisum symbiotic bacterium), this protein is S-adenosylmethionine decarboxylase proenzyme.